Here is a 456-residue protein sequence, read N- to C-terminus: Antizyme inhibitor 2 (456 aa).

Residue C357 is the Proton donor; shared with dimeric partner of the active site.

Belongs to the Orn/Lys/Arg decarboxylase class-II family. ODC antizyme inhibitor subfamily. Monomer. Interacts with OAZ1; this interaction disrupts the interaction between the antizyme and ODC1. Does not form a heterodimer with ODC1.

The protein resides in the nucleus. It localises to the cytoplasm. The protein localises to the perinuclear region. It is found in the membrane. Its subcellular location is the cytoplasmic vesicle. The protein resides in the endoplasmic reticulum-Golgi intermediate compartment. It localises to the golgi apparatus. The protein localises to the cis-Golgi network. It is found in the trans-Golgi network. Its subcellular location is the cytoplasmic granule. The protein resides in the cell projection. It localises to the axon. The protein localises to the dendrite. It is found in the perikaryon. Antizyme inhibitor (AZI) protein that positively regulates ornithine decarboxylase (ODC) activity and polyamine uptake. AZI is an enzymatically inactive ODC homolog that counteracts the negative effect of ODC antizyme (AZ) on ODC activity by competing with ODC for antizyme-binding. Inhibits antizyme-dependent ODC degradation and releases ODC monomers from their inactive complex with antizymes, leading to formation of the catalytically active ODC homodimer and restoring polyamine production. Participates in the morphological integrity of the trans-Golgi network (TGN) and functions as a regulator of intracellular secretory vesicle trafficking. This Xenopus laevis (African clawed frog) protein is Antizyme inhibitor 2 (azin2).